The chain runs to 158 residues: UPF0266 membrane protein YobD (158 aa).

A run of 3 helical transmembrane segments spans residues 6–26 (LVLILFIAALLAFAIYDQFIM), 45–65 (IDSVIFVGLIVILIYNNVTNH), and 67–87 (ALITTWLLSALALMGFYIFWI).

It belongs to the UPF0266 family.

The protein localises to the cell inner membrane. The polypeptide is UPF0266 membrane protein YobD (Shigella boydii serotype 4 (strain Sb227)).